The chain runs to 100 residues: Aspartyl/glutamyl-tRNA(Asn/Gln) amidotransferase subunit C (100 aa).

This sequence belongs to the GatC family. In terms of assembly, heterotrimer of A, B and C subunits.

The catalysed reaction is L-glutamyl-tRNA(Gln) + L-glutamine + ATP + H2O = L-glutaminyl-tRNA(Gln) + L-glutamate + ADP + phosphate + H(+). It catalyses the reaction L-aspartyl-tRNA(Asn) + L-glutamine + ATP + H2O = L-asparaginyl-tRNA(Asn) + L-glutamate + ADP + phosphate + 2 H(+). Allows the formation of correctly charged Asn-tRNA(Asn) or Gln-tRNA(Gln) through the transamidation of misacylated Asp-tRNA(Asn) or Glu-tRNA(Gln) in organisms which lack either or both of asparaginyl-tRNA or glutaminyl-tRNA synthetases. The reaction takes place in the presence of glutamine and ATP through an activated phospho-Asp-tRNA(Asn) or phospho-Glu-tRNA(Gln). The protein is Aspartyl/glutamyl-tRNA(Asn/Gln) amidotransferase subunit C of Staphylococcus aureus (strain Newman).